A 433-amino-acid chain; its full sequence is Serine/threonine-protein kinase DCLK1 (433 aa).

Residues 1–74 (MLELIEVNGT…GEEESDEGFQ (74 aa)) are disordered. Phosphoserine is present on residues Ser23, Ser25, Ser27, Ser30, Ser40, Ser45, Ser46, Ser48, Ser57, and Ser69. A compositionally biased stretch (low complexity) spans 40–57 (SQHGGSSTSLSSTKVCSS). Positions 59 to 71 (DENDGPGEEESDE) are enriched in acidic residues. In terms of domain architecture, Protein kinase spans 83–340 (YKVGRTIGDG…AVQVLEHPWV (258 aa)). ATP contacts are provided by residues 89 to 97 (IGDGNFAVV) and Lys112. Asp204 acts as the Proton acceptor in catalysis. Tyr213 carries the phosphotyrosine modification. Positions 388–400 (QVFRRRRNQDVRG) are enriched in basic and acidic residues. The tract at residues 388-433 (QVFRRRRNQDVRGRYKAQPAPPELNSESEDYSPSSSETVRSPNSPF) is disordered. A phosphoserine mark is found at Ser419, Ser428, and Ser431.

This sequence belongs to the protein kinase superfamily. CAMK Ser/Thr protein kinase family. CaMK subfamily.

It carries out the reaction L-seryl-[protein] + ATP = O-phospho-L-seryl-[protein] + ADP + H(+). The catalysed reaction is L-threonyl-[protein] + ATP = O-phospho-L-threonyl-[protein] + ADP + H(+). In terms of biological role, probable kinase that may be involved in a calcium-signaling pathway controlling neuronal migration in the developing brain. May also participate in functions of the mature nervous system. This is Serine/threonine-protein kinase DCLK1 (Dclk1) from Rattus norvegicus (Rat).